A 358-amino-acid chain; its full sequence is PqqA peptide cyclase (358 aa).

Residues 4-219 (PSPPMSLLAE…VEAERAKGGL (216 aa)) enclose the Radical SAM core domain. 3 residues coordinate [4Fe-4S] cluster: Cys-18, Cys-22, and Cys-25.

The protein belongs to the radical SAM superfamily. PqqE family. In terms of assembly, interacts with PqqD. The interaction is necessary for activity of PqqE. It depends on [4Fe-4S] cluster as a cofactor.

It catalyses the reaction [PQQ precursor protein] + S-adenosyl-L-methionine = E-Y cross-linked-[PQQ precursor protein] + 5'-deoxyadenosine + L-methionine + H(+). The protein operates within cofactor biosynthesis; pyrroloquinoline quinone biosynthesis. In terms of biological role, catalyzes the cross-linking of a glutamate residue and a tyrosine residue in the PqqA protein as part of the biosynthesis of pyrroloquinoline quinone (PQQ). The chain is PqqA peptide cyclase from Gluconobacter oxydans (strain 621H) (Gluconobacter suboxydans).